A 223-amino-acid chain; its full sequence is Uracil-DNA glycosylase (223 aa).

The active-site Proton acceptor is the Asp-61.

It belongs to the uracil-DNA glycosylase (UDG) superfamily. UNG family.

It localises to the cytoplasm. It catalyses the reaction Hydrolyzes single-stranded DNA or mismatched double-stranded DNA and polynucleotides, releasing free uracil.. Its function is as follows. Excises uracil residues from the DNA which can arise as a result of misincorporation of dUMP residues by DNA polymerase or due to deamination of cytosine. This chain is Uracil-DNA glycosylase, found in Histophilus somni (strain 129Pt) (Haemophilus somnus).